A 501-amino-acid chain; its full sequence is TGF-beta receptor type-1 (501 aa).

The first 29 residues, 1–29 (MEAASAALRRCLLLIVLVAAATLLPGAKA), serve as a signal peptide directing secretion. The Extracellular portion of the chain corresponds to 30–124 (LQCFCHLCTK…QSAGLGPVEL (95 aa)). 5 cysteine pairs are disulfide-bonded: C32–C50, C34–C37, C44–C67, C82–C94, and C95–C100. N-linked (GlcNAc...) asparagine glycosylation is present at N41. The chain crosses the membrane as a helical span at residues 125-145 (AAVIAGPVCFVCIALMLMVYI). The Cytoplasmic portion of the chain corresponds to 146–501 (CHNRTVIHHR…QLSQQEGIKM (356 aa)). Position 163 is a phosphoserine (S163). The GS domain maps to 173-202 (TTLKDLIYDMTTSGSGSGLPLLVQRTIART). Phosphothreonine; by TGFBR2 is present on residues T183 and T184. Phosphoserine; by TGFBR2 occurs at positions 185, 187, and 189. An FKBP1A-binding motif is present at residues 191 to 192 (LP). Positions 203–493 (IVLQESIGKG…LRIKKTLSQL (291 aa)) constitute a Protein kinase domain. Residues 209–217 (IGKGRFGEV) and K230 each bind ATP. The Proton acceptor role is filled by D331. Residue K389 forms a Glycyl lysine isopeptide (Lys-Gly) (interchain with G-Cter in SUMO) linkage.

It belongs to the protein kinase superfamily. TKL Ser/Thr protein kinase family. TGFB receptor subfamily. In terms of assembly, homodimer; in the endoplasmic reticulum but also at the cell membrane. Heterohexamer; TGFB1, TGFB2 and TGFB3 homodimeric ligands assemble a functional receptor composed of two TGFBR1 and TGFBR2 heterodimers to form a ligand-receptor heterohexamer. The respective affinity of TGBRB1 and TGFBR2 for the ligands may modulate the kinetics of assembly of the receptor and may explain the different biological activities of TGFB1, TGFB2 and TGFB3. Component of a complex composed of TSC22D1 (via N-terminus), TGFBR1 and TGFBR2; the interaction between TSC22D1 and TGFBR1 is inhibited by SMAD7 and promoted by TGFB1. Interacts with CD109; inhibits TGF-beta receptor activation in keratinocytes. Interacts with RBPMS. Interacts with SMAD2, SMAD3 and ZFYVE9; ZFYVE9 recruits SMAD2 and SMAD3 to the TGF-beta receptor. Interacts with TRAF6 and MAP3K7; induces MAP3K7 activation by TRAF6. Interacts with PARD6A; involved in TGF-beta induced epithelial to mesenchymal transition. Interacts with NEDD4L. Interacts with SMAD7, SMURF1 and SMURF2; SMAD7 recruits NEDD4L, SMURF1 and SMURF2 to the TGF-beta receptor. Interacts with USP15 and VPS39. Interacts (unphosphorylated) with FKBP1A; prevents TGFBR1 phosphorylation by TGFBR2 and stabilizes it in the inactive conformation. Interacts with SDCBP (via C-terminus). Interacts with CAV1 and this interaction is impaired in the presence of SDCBP. Interacts with APPL1; interaction is TGF beta dependent; mediates trafficking of the TGFBR1 from the endosomes to the nucleus via microtubules in a TRAF6-dependent manner. Interacts with GPR50; this interaction promotes the constitutive activation of SMAD signaling pathway. Mg(2+) serves as cofactor. The cofactor is Mn(2+). Post-translationally, phosphorylated at basal levels in the absence of ligand. Activated upon phosphorylation by TGFBR2, mainly in the GS domain. Phosphorylation in the GS domain abrogates FKBP1A-binding. N-Glycosylated. In terms of processing, ubiquitinated; undergoes ubiquitination catalyzed by several E3 ubiquitin ligases including SMURF1, SMURF2 and NEDD4L2. Results in the proteasomal and/or lysosomal degradation of the receptor thereby negatively regulating its activity. Deubiquitinated by USP15, leading to stabilization of the protein and enhanced TGF-beta signal. Its ubiquitination and proteasome-mediated degradation is negatively regulated by SDCBP. As to expression, urogenital ridge, testis, ovary, brain and lungs.

It is found in the cell membrane. The protein resides in the cell junction. Its subcellular location is the tight junction. The protein localises to the membrane raft. It localises to the cell surface. It catalyses the reaction L-threonyl-[receptor-protein] + ATP = O-phospho-L-threonyl-[receptor-protein] + ADP + H(+). It carries out the reaction L-seryl-[receptor-protein] + ATP = O-phospho-L-seryl-[receptor-protein] + ADP + H(+). With respect to regulation, kept in an inactive conformation by FKBP1A preventing receptor activation in absence of ligand. CD109 is another inhibitor of the receptor. Functionally, transmembrane serine/threonine kinase forming with the TGF-beta type II serine/threonine kinase receptor, TGFBR2, the non-promiscuous receptor for the TGF-beta cytokines TGFB1, TGFB2 and TGFB3. Transduces the TGFB1, TGFB2 and TGFB3 signal from the cell surface to the cytoplasm and is thus regulating a plethora of physiological and pathological processes including cell cycle arrest in epithelial and hematopoietic cells, control of mesenchymal cell proliferation and differentiation, wound healing, extracellular matrix production, immunosuppression and carcinogenesis. The formation of the receptor complex composed of 2 TGFBR1 and 2 TGFBR2 molecules symmetrically bound to the cytokine dimer results in the phosphorylation and the activation of TGFBR1 by the constitutively active TGFBR2. Activated TGFBR1 phosphorylates SMAD2 which dissociates from the receptor and interacts with SMAD4. The SMAD2-SMAD4 complex is subsequently translocated to the nucleus where it modulates the transcription of the TGF-beta-regulated genes. This constitutes the canonical SMAD-dependent TGF-beta signaling cascade. Also involved in non-canonical, SMAD-independent TGF-beta signaling pathways. For instance, TGFBR1 induces TRAF6 autoubiquitination which in turn results in MAP3K7 ubiquitination and activation to trigger apoptosis. Also regulates epithelial to mesenchymal transition through a SMAD-independent signaling pathway through PARD6A phosphorylation and activation. The sequence is that of TGF-beta receptor type-1 (Tgfbr1) from Rattus norvegicus (Rat).